The sequence spans 578 residues: Proline--tRNA ligase (578 aa).

It belongs to the class-II aminoacyl-tRNA synthetase family. ProS type 1 subfamily. Homodimer.

Its subcellular location is the cytoplasm. The enzyme catalyses tRNA(Pro) + L-proline + ATP = L-prolyl-tRNA(Pro) + AMP + diphosphate. Functionally, catalyzes the attachment of proline to tRNA(Pro) in a two-step reaction: proline is first activated by ATP to form Pro-AMP and then transferred to the acceptor end of tRNA(Pro). As ProRS can inadvertently accommodate and process non-cognate amino acids such as alanine and cysteine, to avoid such errors it has two additional distinct editing activities against alanine. One activity is designated as 'pretransfer' editing and involves the tRNA(Pro)-independent hydrolysis of activated Ala-AMP. The other activity is designated 'posttransfer' editing and involves deacylation of mischarged Ala-tRNA(Pro). The misacylated Cys-tRNA(Pro) is not edited by ProRS. This chain is Proline--tRNA ligase, found in Burkholderia pseudomallei (strain 668).